The sequence spans 220 residues: Ribosomal RNA large subunit methyltransferase E (220 aa).

5 residues coordinate S-adenosyl-L-methionine: Gly60, Trp62, Asp92, Asp108, and Asp133. Residue Lys173 is the Proton acceptor of the active site.

It belongs to the class I-like SAM-binding methyltransferase superfamily. RNA methyltransferase RlmE family.

The protein localises to the cytoplasm. It carries out the reaction uridine(2552) in 23S rRNA + S-adenosyl-L-methionine = 2'-O-methyluridine(2552) in 23S rRNA + S-adenosyl-L-homocysteine + H(+). Specifically methylates the uridine in position 2552 of 23S rRNA at the 2'-O position of the ribose in the fully assembled 50S ribosomal subunit. In Paraburkholderia phymatum (strain DSM 17167 / CIP 108236 / LMG 21445 / STM815) (Burkholderia phymatum), this protein is Ribosomal RNA large subunit methyltransferase E.